The primary structure comprises 116 residues: Putative serine proteinase inhibitor 2 homolog first part (116 aa).

Belongs to the serpin family. Poxviruses subfamily.

The polypeptide is Putative serine proteinase inhibitor 2 homolog first part (Vaccinia virus (strain Copenhagen) (VACV)).